The chain runs to 258 residues: Imidazole glycerol phosphate synthase subunit HisF (258 aa).

Catalysis depends on residues Asp-11 and Asp-130.

It belongs to the HisA/HisF family. Heterodimer of HisH and HisF.

It localises to the cytoplasm. The catalysed reaction is 5-[(5-phospho-1-deoxy-D-ribulos-1-ylimino)methylamino]-1-(5-phospho-beta-D-ribosyl)imidazole-4-carboxamide + L-glutamine = D-erythro-1-(imidazol-4-yl)glycerol 3-phosphate + 5-amino-1-(5-phospho-beta-D-ribosyl)imidazole-4-carboxamide + L-glutamate + H(+). The protein operates within amino-acid biosynthesis; L-histidine biosynthesis; L-histidine from 5-phospho-alpha-D-ribose 1-diphosphate: step 5/9. Its function is as follows. IGPS catalyzes the conversion of PRFAR and glutamine to IGP, AICAR and glutamate. The HisF subunit catalyzes the cyclization activity that produces IGP and AICAR from PRFAR using the ammonia provided by the HisH subunit. This is Imidazole glycerol phosphate synthase subunit HisF from Yersinia pseudotuberculosis serotype O:1b (strain IP 31758).